A 47-amino-acid polypeptide reads, in one-letter code: Lysis protein for colicin E5 (47 aa).

A signal peptide spans 1–19; that stretch reads MKKITWIILLLLAAIILAA. Residue C20 is the site of N-palmitoyl cysteine attachment. The S-diacylglycerol cysteine moiety is linked to residue C20.

It localises to the cell outer membrane. Lysis proteins are required for both colicin release and partial cell lysis. This Escherichia coli protein is Lysis protein for colicin E5 (lys).